Reading from the N-terminus, the 298-residue chain is Bifunctional protein FolD (298 aa).

NADP(+) is bound by residues 165–167 (GRS), serine 190, and isoleucine 231.

It belongs to the tetrahydrofolate dehydrogenase/cyclohydrolase family. As to quaternary structure, homodimer.

It catalyses the reaction (6R)-5,10-methylene-5,6,7,8-tetrahydrofolate + NADP(+) = (6R)-5,10-methenyltetrahydrofolate + NADPH. The catalysed reaction is (6R)-5,10-methenyltetrahydrofolate + H2O = (6R)-10-formyltetrahydrofolate + H(+). It participates in one-carbon metabolism; tetrahydrofolate interconversion. Functionally, catalyzes the oxidation of 5,10-methylenetetrahydrofolate to 5,10-methenyltetrahydrofolate and then the hydrolysis of 5,10-methenyltetrahydrofolate to 10-formyltetrahydrofolate. This Prochlorococcus marinus subsp. pastoris (strain CCMP1986 / NIES-2087 / MED4) protein is Bifunctional protein FolD.